A 281-amino-acid polypeptide reads, in one-letter code: 1-acyl-sn-glycerol-3-phosphate acyltransferase (281 aa).

3 consecutive transmembrane segments (helical) span residues Ile40 to Leu60, Leu71 to Ile91, and Ala110 to Ala130. The HXXXXD motif motif lies at His109–Asp114.

Belongs to the 1-acyl-sn-glycerol-3-phosphate acyltransferase family.

It is found in the membrane. It carries out the reaction a 1-acyl-sn-glycero-3-phosphate + an acyl-CoA = a 1,2-diacyl-sn-glycero-3-phosphate + CoA. It participates in phospholipid metabolism; CDP-diacylglycerol biosynthesis; CDP-diacylglycerol from sn-glycerol 3-phosphate: step 2/3. Its function is as follows. Converts lysophosphatidic acid (LPA) into phosphatidic acid by incorporating acyl moiety at the 2 position. This enzyme uses erucoyl-CoA as an acyl donor. This is 1-acyl-sn-glycerol-3-phosphate acyltransferase from Limnanthes alba (White meadowfoam).